A 186-amino-acid chain; its full sequence is Large ribosomal subunit protein uL10 (186 aa).

It belongs to the universal ribosomal protein uL10 family. Part of the ribosomal stalk of the 50S ribosomal subunit. The N-terminus interacts with L11 and the large rRNA to form the base of the stalk. The C-terminus forms an elongated spine to which L12 dimers bind in a sequential fashion forming a multimeric L10(L12)X complex.

Functionally, forms part of the ribosomal stalk, playing a central role in the interaction of the ribosome with GTP-bound translation factors. The polypeptide is Large ribosomal subunit protein uL10 (Roseiflexus sp. (strain RS-1)).